The chain runs to 1383 residues: DNA-directed RNA polymerase subunit beta (1383 aa).

It belongs to the RNA polymerase beta chain family. In terms of assembly, the RNAP catalytic core consists of 2 alpha, 1 beta, 1 beta' and 1 omega subunit. When a sigma factor is associated with the core the holoenzyme is formed, which can initiate transcription.

The enzyme catalyses RNA(n) + a ribonucleoside 5'-triphosphate = RNA(n+1) + diphosphate. In terms of biological role, DNA-dependent RNA polymerase catalyzes the transcription of DNA into RNA using the four ribonucleoside triphosphates as substrates. This Bartonella quintana (strain Toulouse) (Rochalimaea quintana) protein is DNA-directed RNA polymerase subunit beta.